The chain runs to 134 residues: Putative pre-16S rRNA nuclease (134 aa).

It belongs to the YqgF nuclease family.

It is found in the cytoplasm. Could be a nuclease involved in processing of the 5'-end of pre-16S rRNA. In Helicobacter pylori (strain G27), this protein is Putative pre-16S rRNA nuclease.